The primary structure comprises 150 residues: D-aminoacyl-tRNA deacylase (150 aa).

A Gly-cisPro motif, important for rejection of L-amino acids motif is present at residues G138 to P139.

The protein belongs to the DTD family. In terms of assembly, homodimer.

It localises to the cytoplasm. The catalysed reaction is glycyl-tRNA(Ala) + H2O = tRNA(Ala) + glycine + H(+). The enzyme catalyses a D-aminoacyl-tRNA + H2O = a tRNA + a D-alpha-amino acid + H(+). In terms of biological role, an aminoacyl-tRNA editing enzyme that deacylates mischarged D-aminoacyl-tRNAs. Also deacylates mischarged glycyl-tRNA(Ala), protecting cells against glycine mischarging by AlaRS. Acts via tRNA-based rather than protein-based catalysis; rejects L-amino acids rather than detecting D-amino acids in the active site. By recycling D-aminoacyl-tRNA to D-amino acids and free tRNA molecules, this enzyme counteracts the toxicity associated with the formation of D-aminoacyl-tRNA entities in vivo and helps enforce protein L-homochirality. This is D-aminoacyl-tRNA deacylase from Chlorobaculum tepidum (strain ATCC 49652 / DSM 12025 / NBRC 103806 / TLS) (Chlorobium tepidum).